Here is a 348-residue protein sequence, read N- to C-terminus: 3-isopropylmalate dehydrogenase (348 aa).

Residue G76–E87 coordinates NAD(+). The substrate site is built by R94, R104, R132, and D217. Mg(2+) contacts are provided by D217, D241, and D245. An NAD(+)-binding site is contributed by G275–N287.

Belongs to the isocitrate and isopropylmalate dehydrogenases family. LeuB type 1 subfamily. Homodimer. Mg(2+) serves as cofactor. Requires Mn(2+) as cofactor.

It is found in the cytoplasm. It catalyses the reaction (2R,3S)-3-isopropylmalate + NAD(+) = 4-methyl-2-oxopentanoate + CO2 + NADH. It functions in the pathway amino-acid biosynthesis; L-leucine biosynthesis; L-leucine from 3-methyl-2-oxobutanoate: step 3/4. Its function is as follows. Catalyzes the oxidation of 3-carboxy-2-hydroxy-4-methylpentanoate (3-isopropylmalate) to 3-carboxy-4-methyl-2-oxopentanoate. The product decarboxylates to 4-methyl-2 oxopentanoate. The chain is 3-isopropylmalate dehydrogenase from Staphylococcus aureus (strain COL).